The following is a 446-amino-acid chain: DDB1- and CUL4-associated factor 12-A (446 aa).

Over residues 1–12 (MTRRSVSRKRRA) the composition is skewed to basic residues. The tract at residues 1 to 32 (MTRRSVSRKRRANPGSGPGEQSDWDHSAHKRK) is disordered. 4 WD repeats span residues 132-173 (SHQS…PVCV), 177-215 (GHND…VNKS), 245-284 (PVNC…SKLL), and 333-370 (EQGS…FLED).

The protein belongs to the WD repeat DCAF12 family. As to quaternary structure, component of the DCX(DCAF12) E3 ubiquitin ligase complex, at least composed of cul4 (cul4a or cul4b), ddb1, dcaf12 and rbx1.

The protein localises to the cytoplasm. Its subcellular location is the cytoskeleton. It is found in the microtubule organizing center. It localises to the centrosome. The protein resides in the nucleus. It participates in protein modification; protein ubiquitination. Functionally, substrate-recognition component of a DCX (DDB1-CUL4-X-box) E3 ubiquitin-protein ligase complex of the DesCEND (destruction via C-end degrons) pathway, which recognizes a C-degron located at the extreme C terminus of target proteins, leading to their ubiquitination and degradation. The C-degron recognized by the DesCEND pathway is usually a motif of less than ten residues and can be present in full-length proteins, truncated proteins or proteolytically cleaved forms. The DCX(DCAF12) complex specifically recognizes proteins with a diglutamate (Glu-Glu) at the C-terminus leading to their ubiquitination and degradation. Also directly recognizes the C-terminal glutamate-leucine (Glu-Leu) degron as an alternative degron in proteins leading to their ubiquitination and degradation. The chain is DDB1- and CUL4-associated factor 12-A (dcaf12-a) from Xenopus laevis (African clawed frog).